The chain runs to 270 residues: Undecaprenyl-diphosphatase 1 (270 aa).

Transmembrane regions (helical) follow at residues 41–61 (IEGF…VLLV), 88–108 (FRFI…GVLF), 117–137 (KDGV…LFLI), 192–212 (FSFL…ITDI), 218–238 (LGEL…ATYF), and 250–270 (GNLV…LIFA).

This sequence belongs to the UppP family.

The protein localises to the cell membrane. It carries out the reaction di-trans,octa-cis-undecaprenyl diphosphate + H2O = di-trans,octa-cis-undecaprenyl phosphate + phosphate + H(+). Its function is as follows. Catalyzes the dephosphorylation of undecaprenyl diphosphate (UPP). Confers resistance to bacitracin. The chain is Undecaprenyl-diphosphatase 1 from Bacillus licheniformis (strain ATCC 14580 / DSM 13 / JCM 2505 / CCUG 7422 / NBRC 12200 / NCIMB 9375 / NCTC 10341 / NRRL NRS-1264 / Gibson 46).